Here is an 883-residue protein sequence, read N- to C-terminus: Translation initiation factor IF-2 (883 aa).

Positions 1-259 (MVDTKTPGDK…GASKQRGRLT (259 aa)) are disordered. 2 stretches are compositionally biased toward low complexity: residues 10-22 (KTLT…LTLK) and 77-89 (PRQQ…PQQS). The segment covering 113–184 (ARVREIEERK…GDAEPAKKPA (72 aa)) has biased composition (basic and acidic residues). Low complexity predominate over residues 185–218 (ETSTTTTTAAPARPATTTTRTPTPAGRPPAVAAE). The span at 235 to 244 (PARPAPPPKQ) shows a compositional bias: pro residues. The 170-residue stretch at 379–548 (PRSPVVTVMG…MIALQAEILE (170 aa)) folds into the tr-type G domain. The tract at residues 388–395 (GHVDHGKT) is G1. 388-395 (GHVDHGKT) contacts GTP. A G2 region spans residues 413–417 (GITQH). Positions 436–439 (DTPG) are G3. GTP is bound by residues 436–440 (DTPGH) and 490–493 (NKID). The G4 stretch occupies residues 490-493 (NKID). The segment at 526-528 (SAK) is G5.

This sequence belongs to the TRAFAC class translation factor GTPase superfamily. Classic translation factor GTPase family. IF-2 subfamily.

The protein localises to the cytoplasm. Functionally, one of the essential components for the initiation of protein synthesis. Protects formylmethionyl-tRNA from spontaneous hydrolysis and promotes its binding to the 30S ribosomal subunits. Also involved in the hydrolysis of GTP during the formation of the 70S ribosomal complex. In Rhodopseudomonas palustris (strain ATCC BAA-98 / CGA009), this protein is Translation initiation factor IF-2.